Here is a 139-residue protein sequence, read N- to C-terminus: D-ribose pyranase (139 aa).

The active-site Proton donor is the H20. Substrate contacts are provided by residues D28, H106, and 128–130; that span reads YAN.

The protein belongs to the RbsD / FucU family. RbsD subfamily. In terms of assembly, homodecamer.

Its subcellular location is the cytoplasm. It catalyses the reaction beta-D-ribopyranose = beta-D-ribofuranose. It participates in carbohydrate metabolism; D-ribose degradation; D-ribose 5-phosphate from beta-D-ribopyranose: step 1/2. Catalyzes the interconversion of beta-pyran and beta-furan forms of D-ribose. The sequence is that of D-ribose pyranase from Haemophilus influenzae (strain 86-028NP).